The primary structure comprises 375 residues: Alcohol dehydrogenase class-3 chain H (375 aa).

Ala-1 bears the N-acetylalanine mark. 7 residues coordinate Zn(2+): Cys-46, His-68, Cys-98, Cys-101, Cys-104, Cys-112, and Cys-175.

It belongs to the zinc-containing alcohol dehydrogenase family. Class-III subfamily. As to quaternary structure, homodimer or heterodimer with L chain. Zn(2+) serves as cofactor.

It is found in the cytoplasm. It catalyses the reaction a primary alcohol + NAD(+) = an aldehyde + NADH + H(+). The catalysed reaction is a secondary alcohol + NAD(+) = a ketone + NADH + H(+). The enzyme catalyses S-(hydroxymethyl)glutathione + NADP(+) = S-formylglutathione + NADPH + H(+). It carries out the reaction S-(hydroxymethyl)glutathione + NAD(+) = S-formylglutathione + NADH + H(+). Its function is as follows. Class-III ADH is remarkably ineffective in oxidizing ethanol, but it readily catalyzes the oxidation of long-chain primary alcohols and the oxidation of S-(hydroxymethyl) glutathione. This Gadus morhua (Atlantic cod) protein is Alcohol dehydrogenase class-3 chain H.